A 96-amino-acid polypeptide reads, in one-letter code: Large ribosomal subunit protein eL14 (96 aa).

It belongs to the eukaryotic ribosomal protein eL14 family.

The chain is Large ribosomal subunit protein eL14 from Desulfurococcus amylolyticus (strain DSM 18924 / JCM 16383 / VKM B-2413 / 1221n) (Desulfurococcus kamchatkensis).